A 423-amino-acid polypeptide reads, in one-letter code: Growth hormone-releasing hormone receptor (423 aa).

The N-terminal stretch at 1 to 22 (MDSGVWAACIFCLLSSLPVALG) is a signal peptide. Residues 23–130 (HVHPECDFIT…DEKSYFSTVR (108 aa)) are Extracellular-facing. Intrachain disulfides connect Cys-41-Cys-64, Cys-55-Cys-96, and Cys-78-Cys-112. Asn-50 carries N-linked (GlcNAc...) asparagine glycosylation. The helical transmembrane segment at 131–151 (IVYTTGHSVSAVALFVAIAIL) threads the bilayer. Topologically, residues 152–167 (VALRRLHCPRNYIHSQ) are cytoplasmic. A helical transmembrane segment spans residues 168-188 (LFATFILKAGAVFLKDAALFH). Topologically, residues 189 to 210 (SENTDHCSFSTVLCKVSVATSH) are extracellular. The helical transmembrane segment at 211–231 (FATMTNFSWLLAEAVYLTCLL) threads the bilayer. At 232–240 (ASTSPSTRR) the chain is on the cytoplasmic side. The chain crosses the membrane as a helical span at residues 241–261 (AFWWLVLAGWGLPLLFTGTWV). The Extracellular portion of the chain corresponds to 262–283 (GCKLAFEDVACWDLDDSSPYWW). Residues 284 to 304 (IIKGPIVLSVGVNFGLFLNII) traverse the membrane as a helical segment. The Cytoplasmic segment spans residues 305-331 (RILLRKLEPAQGSLHTQPQYWRLSKST). The helical transmembrane segment at 332-352 (LLLIPLFGIHYVIFNFLPDSA) threads the bilayer. Over 353-357 (GLGIR) the chain is Extracellular. Residues 358–378 (LPLELGLGSFQGFIVAILYCF) traverse the membrane as a helical segment. Residues 379–423 (LNQEVRTEISRRWHGHDPELLPAWRTHAKWAKPSRSRAKVLTTVC) are Cytoplasmic-facing.

Belongs to the G-protein coupled receptor 2 family. Pituitary gland. Also detected in the lymphocytes and thymocytes.

The protein localises to the cell membrane. Receptor for GRF, coupled to G proteins which activate adenylyl cyclase. Stimulates somatotroph cell growth, growth hormone gene transcription and growth hormone secretion. The sequence is that of Growth hormone-releasing hormone receptor (GHRHR) from Sus scrofa (Pig).